Here is a 216-residue protein sequence, read N- to C-terminus: Gamma-glutamylcyclotransferase 2-1 (216 aa).

Position 5–10 (5–10 (VFGYGS)) interacts with substrate. Glutamate 87 functions as the Proton acceptor in the catalytic mechanism.

This sequence belongs to the gamma-glutamylcyclotransferase family. It depends on Mn(2+) as a cofactor. In terms of tissue distribution, expressed in the central vascular bundle of roots, leaf veins, hydathodes, cauline leaves, shoot apex, sepal veins, flower receptacles and developing seeds.

It is found in the cytoplasm. The catalysed reaction is an alpha-(gamma-L-glutamyl)-L-amino acid = 5-oxo-L-proline + an L-alpha-amino acid. Catalyzes the formation of 5-oxoproline from gamma-glutamyl dipeptides and plays a significant role in glutathione (GSH) homeostasis. Converts both GSH and gamma-glutamyl-L-alanine to 5-oxoproline in vitro. Plays a role in detoxification of heavy metals and metalloids by recycling glutamate and maintaining GSH homeostasis. The chain is Gamma-glutamylcyclotransferase 2-1 from Arabidopsis thaliana (Mouse-ear cress).